The sequence spans 356 residues: Protein RecA (356 aa).

68 to 75 contributes to the ATP binding site; sequence GQESSGKT.

Belongs to the RecA family.

Its subcellular location is the cytoplasm. Functionally, can catalyze the hydrolysis of ATP in the presence of single-stranded DNA, the ATP-dependent uptake of single-stranded DNA by duplex DNA, and the ATP-dependent hybridization of homologous single-stranded DNAs. It interacts with LexA causing its activation and leading to its autocatalytic cleavage. In Thermotoga maritima (strain ATCC 43589 / DSM 3109 / JCM 10099 / NBRC 100826 / MSB8), this protein is Protein RecA.